The chain runs to 865 residues: High affinity cAMP-specific and IBMX-insensitive 3',5'-cyclic phosphodiesterase 8B (865 aa).

Disordered stretches follow at residues 17-40 and 52-92; these read CRDS…TAPL and AMPP…TCRG. Positions 23-36 are enriched in polar residues; that stretch reads SNSPRQTSSVSQGP. Residues 75–90 are compositionally biased toward low complexity; that stretch reads GSGSSTGSSGPATTTC. Positions 247-318 constitute a PAS domain; sequence ACNSVFTALD…DTINTCIKKG (72 aa). Residues 373 to 415 form a disordered region; sequence IHRDSGDNSQTEPHSFRHKSRRKESIDVKSISSRGSDAPSLQN. The segment covering 402–415 has biased composition (polar residues); it reads SISSRGSDAPSLQN. Phosphoserine is present on Ser497. The 337-residue stretch at 519 to 855 folds into the PDEase domain; that stretch reads TINDVPPSIA…KHWKTLDDLK (337 aa). Catalysis depends on His595, which acts as the Proton donor. Residues His599, His635, and Asp636 each coordinate a divalent metal cation. Ser731 and Ser734 each carry phosphoserine. An a divalent metal cation-binding site is contributed by Asp761.

Belongs to the cyclic nucleotide phosphodiesterase family. PDE8 subfamily. The cofactor is a divalent metal cation. Widely expressed.

The catalysed reaction is 3',5'-cyclic AMP + H2O = AMP + H(+). It participates in purine metabolism; 3',5'-cyclic AMP degradation; AMP from 3',5'-cyclic AMP: step 1/1. Hydrolyzes the second messenger cAMP, which is a key regulator of many important physiological processes. May be involved in specific signaling in the thyroid gland. The sequence is that of High affinity cAMP-specific and IBMX-insensitive 3',5'-cyclic phosphodiesterase 8B (Pde8b) from Mus musculus (Mouse).